A 618-amino-acid polypeptide reads, in one-letter code: Glutamine--fructose-6-phosphate aminotransferase [isomerizing] (618 aa).

The active-site Nucleophile; for GATase activity is Cys2. Residues 2-226 (CGIVGYAGRN…DFETAVLSPT (225 aa)) enclose the Glutamine amidotransferase type-2 domain. The disordered stretch occupies residues 69-94 (HTRWATHGRPSTKNAHPHNSGGNPGK). SIS domains lie at 295–434 (SEDE…VRDR) and 467–608 (CAEG…IDKP). Residue Lys613 is the For Fru-6P isomerization activity of the active site.

As to quaternary structure, homodimer.

It localises to the cytoplasm. It catalyses the reaction D-fructose 6-phosphate + L-glutamine = D-glucosamine 6-phosphate + L-glutamate. In terms of biological role, catalyzes the first step in hexosamine metabolism, converting fructose-6P into glucosamine-6P using glutamine as a nitrogen source. The protein is Glutamine--fructose-6-phosphate aminotransferase [isomerizing] of Methanosarcina acetivorans (strain ATCC 35395 / DSM 2834 / JCM 12185 / C2A).